The primary structure comprises 379 residues: Putative F-box protein At5g62660 (379 aa).

Positions 35 to 84 constitute an F-box domain; that stretch reads ALVAPEIPLDLLIEILTKLPAKSLMRFKCVSKLWSSLIRSRFFSNCYLTV.

The sequence is that of Putative F-box protein At5g62660 from Arabidopsis thaliana (Mouse-ear cress).